Here is a 126-residue protein sequence, read N- to C-terminus: uncharacterized protein (126 aa).

This is an uncharacterized protein from Homo sapiens (Human).